The sequence spans 335 residues: S-adenosylmethionine:tRNA ribosyltransferase-isomerase (335 aa).

This sequence belongs to the QueA family. Monomer.

The protein localises to the cytoplasm. The enzyme catalyses 7-aminomethyl-7-carbaguanosine(34) in tRNA + S-adenosyl-L-methionine = epoxyqueuosine(34) in tRNA + adenine + L-methionine + 2 H(+). The protein operates within tRNA modification; tRNA-queuosine biosynthesis. In terms of biological role, transfers and isomerizes the ribose moiety from AdoMet to the 7-aminomethyl group of 7-deazaguanine (preQ1-tRNA) to give epoxyqueuosine (oQ-tRNA). The protein is S-adenosylmethionine:tRNA ribosyltransferase-isomerase of Thermotoga petrophila (strain ATCC BAA-488 / DSM 13995 / JCM 10881 / RKU-1).